A 443-amino-acid chain; its full sequence is GTPase Der (443 aa).

2 EngA-type G domains span residues 3 to 168 (PLLA…PEAP) and 178 to 353 (VHLA…RNRS). GTP is bound by residues 9–16 (GRPNVGKS), 56–60 (DTGGY), 120–123 (NKVE), 184–191 (GRPNVGKS), 231–235 (DTAGL), and 296–299 (NKWD). A KH-like domain is found at 354-438 (QNVSTSQLNK…PISLRFLHKN (85 aa)).

Belongs to the TRAFAC class TrmE-Era-EngA-EngB-Septin-like GTPase superfamily. EngA (Der) GTPase family. In terms of assembly, associates with the 50S ribosomal subunit.

Functionally, GTPase that plays an essential role in the late steps of ribosome biogenesis. The chain is GTPase Der from Chlorobium chlorochromatii (strain CaD3).